The sequence spans 426 residues: Torsin-4A (426 aa).

Residues 41–60 form a disordered region; the sequence is QPGTEPDSGTGTLGPTGSLG. Residues 48 to 60 show a composition bias toward low complexity; the sequence is SGTGTLGPTGSLG. 2 positions are modified to phosphoserine: Ser-58 and Ser-76. Thr-84 is subject to Phosphothreonine. A Phosphoserine modification is found at Ser-101. The chain crosses the membrane as a helical span at residues 117 to 133; it reads CLLLLVAIVGFQVLNAI. ATP is bound at residue 189–196; the sequence is GPSGVGKS.

It belongs to the ClpA/ClpB family. Torsin subfamily.

The protein localises to the membrane. This Mus musculus (Mouse) protein is Torsin-4A (Tor4a).